The sequence spans 245 residues: 1-(5-phosphoribosyl)-5-[(5-phosphoribosylamino)methylideneamino] imidazole-4-carboxamide isomerase (245 aa).

Residue aspartate 7 is the Proton acceptor of the active site. The active-site Proton donor is aspartate 129.

The protein belongs to the HisA/HisF family.

It localises to the cytoplasm. It catalyses the reaction 1-(5-phospho-beta-D-ribosyl)-5-[(5-phospho-beta-D-ribosylamino)methylideneamino]imidazole-4-carboxamide = 5-[(5-phospho-1-deoxy-D-ribulos-1-ylimino)methylamino]-1-(5-phospho-beta-D-ribosyl)imidazole-4-carboxamide. The protein operates within amino-acid biosynthesis; L-histidine biosynthesis; L-histidine from 5-phospho-alpha-D-ribose 1-diphosphate: step 4/9. The protein is 1-(5-phosphoribosyl)-5-[(5-phosphoribosylamino)methylideneamino] imidazole-4-carboxamide isomerase of Salmonella agona (strain SL483).